The primary structure comprises 89 residues: UPF0223 protein BcerKBAB4_3787 (89 aa).

The protein belongs to the UPF0223 family.

This Bacillus mycoides (strain KBAB4) (Bacillus weihenstephanensis) protein is UPF0223 protein BcerKBAB4_3787.